The sequence spans 248 residues: 2,3-bisphosphoglycerate-dependent phosphoglycerate mutase (248 aa).

Substrate is bound by residues Arg8–Asn15, Thr21–Gly22, Arg60, Glu87–Tyr90, Lys98, Arg114–Arg115, and Gly183–Asn184. His9 serves as the catalytic Tele-phosphohistidine intermediate. Glu87 serves as the catalytic Proton donor/acceptor.

The protein belongs to the phosphoglycerate mutase family. BPG-dependent PGAM subfamily.

The enzyme catalyses (2R)-2-phosphoglycerate = (2R)-3-phosphoglycerate. Its pathway is carbohydrate degradation; glycolysis; pyruvate from D-glyceraldehyde 3-phosphate: step 3/5. Its function is as follows. Catalyzes the interconversion of 2-phosphoglycerate and 3-phosphoglycerate. The chain is 2,3-bisphosphoglycerate-dependent phosphoglycerate mutase from Porphyromonas gingivalis (strain ATCC 33277 / DSM 20709 / CIP 103683 / JCM 12257 / NCTC 11834 / 2561).